The chain runs to 1183 residues: DNA-directed RNA polymerase subunit beta (1183 aa).

Over residues 1153 to 1162 (DMQDNEEEDV) the composition is skewed to acidic residues. Residues 1153–1183 (DMQDNEEEDVVERKVDLQQKDAPQSQKEVTD) form a disordered region. The span at 1173–1183 (DAPQSQKEVTD) shows a compositional bias: polar residues.

This sequence belongs to the RNA polymerase beta chain family. The RNAP catalytic core consists of 2 alpha, 1 beta, 1 beta' and 1 omega subunit. When a sigma factor is associated with the core the holoenzyme is formed, which can initiate transcription.

The catalysed reaction is RNA(n) + a ribonucleoside 5'-triphosphate = RNA(n+1) + diphosphate. Its function is as follows. DNA-dependent RNA polymerase catalyzes the transcription of DNA into RNA using the four ribonucleoside triphosphates as substrates. This Staphylococcus saprophyticus subsp. saprophyticus (strain ATCC 15305 / DSM 20229 / NCIMB 8711 / NCTC 7292 / S-41) protein is DNA-directed RNA polymerase subunit beta.